The sequence spans 421 residues: MSNYTKPRGTVDLYNEAMNEFKSLENFLLTTTKKYGFQQIKTPIFEFAELFMKSAGESSDLVSKEMYLFKDKSDRWLALRPEGTAGVIRAVVENKLLLNNPLPLKLMYFEPCFRYERPQAGRQRQFHQFGVEVLGTKNIYYDFELIALANNILKKLAISDYVLEINYISTAHNRSLWVKSLQEYFNLYRDELTPLSQERITTNPLRILDDKLESQKLVVQQAPKITNFLSNEEKEEFALIKKMLDEHDIKYRVNEGLVRGLDYYSGLVFEFISTSPRLLGQSTIIGGGRYGQLIKQTGGPDYEGIGFGIGIERLLIALLDSNKQILNNFEDKYLIAYFDKELENEAIKLTQSLRINNQLNVDIILDTIKADKIFRLAQRLNAKKLIILAKKEWLNKQVILKDLLSFEQKTLNLDEIKKIKE.

This sequence belongs to the class-II aminoacyl-tRNA synthetase family. As to quaternary structure, homodimer.

The protein localises to the cytoplasm. The catalysed reaction is tRNA(His) + L-histidine + ATP = L-histidyl-tRNA(His) + AMP + diphosphate + H(+). The polypeptide is Histidine--tRNA ligase (Ureaplasma urealyticum serovar 10 (strain ATCC 33699 / Western)).